We begin with the raw amino-acid sequence, 105 residues long: uncharacterized protein (105 aa).

This is an uncharacterized protein from Paracoccus denitrificans.